The chain runs to 370 residues: ABSCISIC ACID-INSENSITIVE 5-like protein 8 (370 aa).

Phosphoserine occurs at positions 25, 44, and 69. The disordered stretch occupies residues 56 to 77; it reads SAEETQEGSQRQGSTTLPPTLS. Polar residues predominate over residues 62–77; sequence EGSQRQGSTTLPPTLS. At Thr111 the chain carries Phosphothreonine. Over residues 260-278 the composition is skewed to polar residues; sequence ESSLLSPSPYISNGSTSTR. The tract at residues 260–281 is disordered; sequence ESSLLSPSPYISNGSTSTRGGK. Positions 293-356 constitute a bZIP domain; sequence VDKKLRRKIK…MEPGMISLHE (64 aa). A basic motif region spans residues 295 to 314; it reads KKLRRKIKNRESAARSRARK. The leucine-zipper stretch occupies residues 328–342; sequence LKKDYEELLKQHVEL. Residues 349–370 form a disordered region; the sequence is PGMISLHERPERKLRRTKSDIK. The span at 354–370 shows a compositional bias: basic and acidic residues; that stretch reads LHERPERKLRRTKSDIK.

The protein belongs to the bZIP family. ABI5 subfamily. In terms of assembly, DNA-binding heterodimer.

It is found in the nucleus. Could participate in abscisic acid-regulated gene expression. The sequence is that of ABSCISIC ACID-INSENSITIVE 5-like protein 8 (BZIP15) from Arabidopsis thaliana (Mouse-ear cress).